Reading from the N-terminus, the 492-residue chain is Beta-glucosidase 38 (492 aa).

The signal sequence occupies residues 1–21; sequence MNMPLLLLIAIVVVSLSHGNG. Residue Gln-45 coordinates a beta-D-glucoside. 2 N-linked (GlcNAc...) asparagine glycosylation sites follow: Asn-73 and Asn-77. Residues His-146 and 191–192 each bind a beta-D-glucoside; that span reads NE. Glu-192 acts as the Proton donor in catalysis. Residues Cys-211 and Cys-214 are joined by a disulfide bond. Asn-310 carries N-linked (GlcNAc...) asparagine glycosylation. Position 331 (Tyr-331) interacts with a beta-D-glucoside. Residue Asn-341 is glycosylated (N-linked (GlcNAc...) asparagine). Glu-400 is a binding site for a beta-D-glucoside. Glu-400 (nucleophile) is an active-site residue. The N-linked (GlcNAc...) asparagine glycan is linked to Asn-408. A beta-D-glucoside is bound by residues Trp-447, 454–455, and Phe-463; that span reads EW.

Belongs to the glycosyl hydrolase 1 family.

The catalysed reaction is Hydrolysis of terminal, non-reducing beta-D-glucosyl residues with release of beta-D-glucose.. The protein is Beta-glucosidase 38 (BGLU38) of Oryza sativa subsp. japonica (Rice).